The chain runs to 26 residues: Citropin-2.1.3 (26 aa).

As to expression, expressed by the dorsal and submental skin glands.

The protein resides in the secreted. The polypeptide is Citropin-2.1.3 (Ranoidea citropa (Australian Blue Mountains tree frog)).